The chain runs to 522 residues: Maturase K (522 aa).

This sequence belongs to the intron maturase 2 family. MatK subfamily.

The protein resides in the plastid. It is found in the chloroplast. In terms of biological role, usually encoded in the trnK tRNA gene intron. Probably assists in splicing its own and other chloroplast group II introns. This Iris sanguinea (Japanese iris) protein is Maturase K.